The following is a 665-amino-acid chain: Cinnamate reductase (665 aa).

Q109 serves as a coordination point for FMN. Catalysis depends on Y182, which acts as the Proton donor. Residues R230, R319, and 341 to 342 (GR) contribute to the FMN site. C365, C368, C372, and C384 together coordinate [4Fe-4S] cluster. FAD-binding residues include A415, E434, N442, K452, and A479.

In the N-terminal section; belongs to the NADH:flavin oxidoreductase/NADH oxidase family. It depends on FMN as a cofactor. Requires FAD as cofactor. [4Fe-4S] cluster serves as cofactor.

It catalyses the reaction 3-phenylpropanoate + NAD(+) = (E)-cinnamate + NADH + H(+). The protein operates within amino-acid degradation; L-phenylalanine degradation. Involved in the fermentation of L-phenylalanine via a Stickland reaction. Catalyzes the reduction of (E)-cinnamate to yield 3-phenylpropionate. The sequence is that of Cinnamate reductase from Clostridium sporogenes (strain ATCC 7955 / DSM 767 / NBRC 16411 / NCIMB 8053 / NCTC 8594 / PA 3679).